Consider the following 128-residue polypeptide: Fluoride-specific ion channel FluC (128 aa).

4 helical membrane-spanning segments follow: residues 4–24 (LLLA…RYLI), 39–59 (GTLI…EFSM), 71–91 (FLTT…YETI), and 99–119 (MTLG…FVVI). The Na(+) site is built by Gly78 and Thr81.

The protein belongs to the fluoride channel Fluc/FEX (TC 1.A.43) family.

The protein localises to the cell membrane. The catalysed reaction is fluoride(in) = fluoride(out). With respect to regulation, na(+) is not transported, but it plays an essential structural role and its presence is essential for fluoride channel function. Functionally, fluoride-specific ion channel. Important for reducing fluoride concentration in the cell, thus reducing its toxicity. This is Fluoride-specific ion channel FluC from Clostridium perfringens (strain 13 / Type A).